The following is a 282-amino-acid chain: 2,3,4,5-tetrahydropyridine-2,6-dicarboxylate N-succinyltransferase (282 aa).

Substrate is bound by residues arginine 109 and aspartate 146.

Belongs to the transferase hexapeptide repeat family. Homotrimer.

It is found in the cytoplasm. The enzyme catalyses (S)-2,3,4,5-tetrahydrodipicolinate + succinyl-CoA + H2O = (S)-2-succinylamino-6-oxoheptanedioate + CoA. The protein operates within amino-acid biosynthesis; L-lysine biosynthesis via DAP pathway; LL-2,6-diaminopimelate from (S)-tetrahydrodipicolinate (succinylase route): step 1/3. This is 2,3,4,5-tetrahydropyridine-2,6-dicarboxylate N-succinyltransferase from Bartonella bacilliformis (strain ATCC 35685 / KC583 / Herrer 020/F12,63).